A 72-amino-acid polypeptide reads, in one-letter code: Translation initiation factor IF-1 1 (72 aa).

An S1-like domain is found at Met-1–Lys-72.

It belongs to the IF-1 family. As to quaternary structure, component of the 30S ribosomal translation pre-initiation complex which assembles on the 30S ribosome in the order IF-2 and IF-3, IF-1 and N-formylmethionyl-tRNA(fMet); mRNA recruitment can occur at any time during PIC assembly.

It localises to the cytoplasm. One of the essential components for the initiation of protein synthesis. Stabilizes the binding of IF-2 and IF-3 on the 30S subunit to which N-formylmethionyl-tRNA(fMet) subsequently binds. Helps modulate mRNA selection, yielding the 30S pre-initiation complex (PIC). Upon addition of the 50S ribosomal subunit IF-1, IF-2 and IF-3 are released leaving the mature 70S translation initiation complex. The polypeptide is Translation initiation factor IF-1 1 (Bordetella avium (strain 197N)).